The following is a 269-amino-acid chain: Formamidopyrimidine-DNA glycosylase (269 aa).

Proline 2 (schiff-base intermediate with DNA) is an active-site residue. Residue glutamate 3 is the Proton donor of the active site. Lysine 57 serves as the catalytic Proton donor; for beta-elimination activity. DNA contacts are provided by histidine 90, arginine 109, and lysine 150. The FPG-type zinc-finger motif lies at 235–269 (QVYGKAGESCPECGEAIQELKIGQRNTFYCSYCQC). The active-site Proton donor; for delta-elimination activity is arginine 259.

It belongs to the FPG family. Monomer. Requires Zn(2+) as cofactor.

It catalyses the reaction Hydrolysis of DNA containing ring-opened 7-methylguanine residues, releasing 2,6-diamino-4-hydroxy-5-(N-methyl)formamidopyrimidine.. It carries out the reaction 2'-deoxyribonucleotide-(2'-deoxyribose 5'-phosphate)-2'-deoxyribonucleotide-DNA = a 3'-end 2'-deoxyribonucleotide-(2,3-dehydro-2,3-deoxyribose 5'-phosphate)-DNA + a 5'-end 5'-phospho-2'-deoxyribonucleoside-DNA + H(+). Its function is as follows. Involved in base excision repair of DNA damaged by oxidation or by mutagenic agents. Acts as a DNA glycosylase that recognizes and removes damaged bases. Has a preference for oxidized purines, such as 7,8-dihydro-8-oxoguanine (8-oxoG). Has AP (apurinic/apyrimidinic) lyase activity and introduces nicks in the DNA strand. Cleaves the DNA backbone by beta-delta elimination to generate a single-strand break at the site of the removed base with both 3'- and 5'-phosphates. This Vibrio vulnificus (strain YJ016) protein is Formamidopyrimidine-DNA glycosylase.